Reading from the N-terminus, the 132-residue chain is Interferon-induced transmembrane protein 5 (132 aa).

The span at 1-11 (MDTAYPREDTR) shows a compositional bias: basic and acidic residues. Positions 1–21 (MDTAYPREDTRAPTPSKAGAH) are disordered. Residues 1-36 (MDTAYPREDTRAPTPSKAGAHTALTLGAPHPPPRDH) are Extracellular-facing. A helical transmembrane segment spans residues 37–57 (LIWSVFSTLYLNLCCLGFLAL). 3 S-palmitoyl cysteine lipidation sites follow: Cys50, Cys51, and Cys84. Residues 58 to 86 (AYSIKARDQKVVGDLEAARRFGSKAKCYN) lie on the Cytoplasmic side of the membrane. Residues 87 to 107 (ILAAMWTLVPPLLLLGLVVTG) form a helical membrane-spanning segment. Over 108–132 (ALHLARLAKDSAAFFSTKFDDADYD) the chain is Extracellular.

It belongs to the CD225/Dispanin family. Interacts with FKBP11. Post-translationally, palmitoylated. In terms of tissue distribution, detected in osteoblasts and fibroblasts (at protein level). Detected in bone.

It localises to the cell membrane. Its function is as follows. Required for normal bone mineralization. In Homo sapiens (Human), this protein is Interferon-induced transmembrane protein 5 (IFITM5).